A 465-amino-acid chain; its full sequence is Flavin-containing monooxygenase FMO GS-OX-like 2 (465 aa).

An FAD-binding site is contributed by 18 to 23 (GAGAAG). An NADP(+)-binding site is contributed by 217–222 (GSSASG).

The protein belongs to the FMO family. FAD is required as a cofactor.

In terms of biological role, catalyzes the conversion of methylthioalkyl glucosinolates of any chain length into methylsulfinylalkyl glucosinolates. The protein is Flavin-containing monooxygenase FMO GS-OX-like 2 of Arabidopsis thaliana (Mouse-ear cress).